Here is a 218-residue protein sequence, read N- to C-terminus: Octanoyltransferase (218 aa).

Residues 32-218 (GDAPEAVWLL…LRTFSRSFPD (187 aa)) enclose the BPL/LPL catalytic domain. Residues 71–78 (RGGQYTYH), 151–153 (AIG), and 164–166 (GLS) contribute to the substrate site. Cys182 serves as the catalytic Acyl-thioester intermediate.

Belongs to the LipB family.

The protein localises to the cytoplasm. The catalysed reaction is octanoyl-[ACP] + L-lysyl-[protein] = N(6)-octanoyl-L-lysyl-[protein] + holo-[ACP] + H(+). Its pathway is protein modification; protein lipoylation via endogenous pathway; protein N(6)-(lipoyl)lysine from octanoyl-[acyl-carrier-protein]: step 1/2. Catalyzes the transfer of endogenously produced octanoic acid from octanoyl-acyl-carrier-protein onto the lipoyl domains of lipoate-dependent enzymes. Lipoyl-ACP can also act as a substrate although octanoyl-ACP is likely to be the physiological substrate. The sequence is that of Octanoyltransferase from Cereibacter sphaeroides (strain ATCC 17025 / ATH 2.4.3) (Rhodobacter sphaeroides).